The sequence spans 283 residues: 4-diphosphocytidyl-2-C-methyl-D-erythritol kinase (283 aa).

Residue lysine 10 is part of the active site. 99–109 (PMGGGLGGGSS) is a binding site for ATP. Residue aspartate 141 is part of the active site.

The protein belongs to the GHMP kinase family. IspE subfamily. As to quaternary structure, homodimer.

The enzyme catalyses 4-CDP-2-C-methyl-D-erythritol + ATP = 4-CDP-2-C-methyl-D-erythritol 2-phosphate + ADP + H(+). It participates in isoprenoid biosynthesis; isopentenyl diphosphate biosynthesis via DXP pathway; isopentenyl diphosphate from 1-deoxy-D-xylulose 5-phosphate: step 3/6. Functionally, catalyzes the phosphorylation of the position 2 hydroxy group of 4-diphosphocytidyl-2C-methyl-D-erythritol. This is 4-diphosphocytidyl-2-C-methyl-D-erythritol kinase from Escherichia coli O127:H6 (strain E2348/69 / EPEC).